The following is a 537-amino-acid chain: Intercellular adhesion molecule 1 (537 aa).

The signal sequence occupies residues 1–27 (MASTRAKPTLPLLLALVTVVIPGPGDA). Residues 28–485 (QVSIHPREAF…LTVLYHSQNN (458 aa)) lie on the Extracellular side of the membrane. 2 consecutive Ig-like C2-type domains span residues 41 to 102 (GGSV…QSSA) and 127 to 195 (GKDL…LDLR). Asn-47 carries an N-linked (GlcNAc...) asparagine glycan. 3 disulfides stabilise this stretch: Cys-48-Cys-91, Cys-52-Cys-95, and Cys-134-Cys-188. Residues 151 to 153 (RGE) carry the Cell attachment site; atypical motif. The Cell attachment site motif lies at 179-181 (RGD). 9 N-linked (GlcNAc...) asparagine glycosylation sites follow: Asn-185, Asn-204, Asn-267, Asn-311, Asn-362, Asn-388, Asn-409, Asn-456, and Asn-469. Residues 232-299 (GTQQKLFCSL…LRCVLELADQ (68 aa)) form the Ig-like C2-type 3 domain. Cys-239 and Cys-292 are joined by a disulfide. The region spanning 327-381 (GSQVTVKCEAHSGSKVVLLSGVEPRPPTPQVQFTLNASSEDHKRSFFCSAALEVA) is the Ig-like C2-type 4 domain. A disulfide bridge links Cys-334 with Cys-374. Intrachain disulfides connect Cys-406–Cys-422, Cys-422–Cys-461, and Cys-434–Cys-461. One can recognise an Ig-like C2-type 5 domain in the interval 415–468 (GSQQTLKCQAWGNPSPKMTCRRKADGALLPIGVVKSVKQEMNGTYVCHAFSSHG). Residues 486–509 (WTIIILVPVLLVIVGLVMAASYVY) traverse the membrane as a helical segment. Residues 510–537 (NRQRKIRIYKLQKAQEEAIKLKGQAPPP) lie on the Cytoplasmic side of the membrane.

Belongs to the immunoglobulin superfamily. ICAM family. Homodimer. Interacts with MUC1 and promotes cell aggregation in epithelial cells. Interacts with ARHGEF26/SGEF. Interacts (on T cell side) with CD81, CD247 and CD9 at immunological synapses between antigen-presenting cells and T cells. Monoubiquitinated, which is promoted by MARCH9 and leads to endocytosis. Expressed at low level on a subpopulation of lymphocytes, macrophages, and endothelial cells, but is strongly induced on these cells, and on fibroblasts and epithelial cells.

The protein localises to the membrane. Functionally, ICAM proteins are ligands for the leukocyte adhesion protein LFA-1 (integrin alpha-L/beta-2). During leukocyte trans-endothelial migration, ICAM1 engagement promotes the assembly of endothelial apical cups through ARHGEF26/SGEF and RHOG activation. The chain is Intercellular adhesion molecule 1 (Icam1) from Mus musculus (Mouse).